The following is a 204-amino-acid chain: Glycerol-3-phosphate acyltransferase (204 aa).

The next 4 membrane-spanning stretches (helical) occupy residues 8–28 (NAQF…LLLA), 76–96 (GVLV…LWGI), 122–142 (MGVM…VWAL), and 166–186 (FILH…VLLY).

It belongs to the PlsY family. In terms of assembly, probably interacts with PlsX.

Its subcellular location is the cell inner membrane. The enzyme catalyses an acyl phosphate + sn-glycerol 3-phosphate = a 1-acyl-sn-glycero-3-phosphate + phosphate. Its pathway is lipid metabolism; phospholipid metabolism. Functionally, catalyzes the transfer of an acyl group from acyl-phosphate (acyl-PO(4)) to glycerol-3-phosphate (G3P) to form lysophosphatidic acid (LPA). This enzyme utilizes acyl-phosphate as fatty acyl donor, but not acyl-CoA or acyl-ACP. This chain is Glycerol-3-phosphate acyltransferase, found in Sulfurimonas denitrificans (strain ATCC 33889 / DSM 1251) (Thiomicrospira denitrificans (strain ATCC 33889 / DSM 1251)).